The following is a 151-amino-acid chain: MKVIFTQDVRGRGKRGQVKDVPDGYAQNYLIKRGLAKEATKGNMNTLKRVEANEKAAYEAEKAEAERIKAELEKDDTIVEFKSKAGNDSRLFGSISSKKIVEGLEKQYGIKVDKRKLNLPEPIKTLGYTNVHAKLFKGVEATVRVHVTEQD.

Belongs to the bacterial ribosomal protein bL9 family.

Functionally, binds to the 23S rRNA. This chain is Large ribosomal subunit protein bL9, found in Lactobacillus acidophilus (strain ATCC 700396 / NCK56 / N2 / NCFM).